We begin with the raw amino-acid sequence, 439 residues long: GTPase Der (439 aa).

2 EngA-type G domains span residues 2 to 168 (ATVL…EEKG) and 181 to 357 (IKVA…ASYT). GTP-binding positions include 8–15 (GKPNVGKS), 55–59 (DTCGV), 118–121 (NKTE), 187–194 (GRPNVGKS), 234–238 (DTAGL), and 300–303 (NKWD). The region spanning 358–439 (TKVPSSAINS…PIFLKFKRSR (82 aa)) is the KH-like domain.

The protein belongs to the TRAFAC class TrmE-Era-EngA-EngB-Septin-like GTPase superfamily. EngA (Der) GTPase family. Associates with the 50S ribosomal subunit.

GTPase that plays an essential role in the late steps of ribosome biogenesis. In Thermotoga petrophila (strain ATCC BAA-488 / DSM 13995 / JCM 10881 / RKU-1), this protein is GTPase Der.